Consider the following 2793-residue polypeptide: Iterative polyketide synthase afoE (2793 aa).

The interval 1–401 (MTRASASGSG…PEKPSFWLTP (401 aa)) is N-terminal acylcarrier protein transacylase domain (SAT). Cys-157 (nucleophile; for transacylase activity) is an active-site residue. Catalysis depends on His-279, which acts as the Proton donor/acceptor; for transacylase activity. Residues 435–862 (SEPIAIVGMS…GSNASMIVTQ (428 aa)) enclose the Ketosynthase family 3 (KS3) domain. Catalysis depends on for beta-ketoacyl synthase activity residues Cys-611, His-746, and His-785. The tract at residues 977-1265 (FGGQISRFVG…SSTITVMAGR (289 aa)) is malonyl-CoA:ACP transacylase (MAT). Residues 1384–1515 (WEFVGYQDDE…ATVEMRSSSD (132 aa)) are N-terminal hotdog fold. Positions 1384-1698 (WEFVGYQDDE…YMRVAKASMS (315 aa)) constitute a PKS/mFAS DH domain. Residues 1411–1696 (YVLSHVIAQT…VQYMRVAKAS (286 aa)) form a product template (PT) domain region. The Proton acceptor; for dehydratase activity role is filled by His-1415. The C-terminal hotdog fold stretch occupies residues 1550–1698 (VEVLQGRNVY…YMRVAKASMS (149 aa)). Asp-1607 (proton donor; for dehydratase activity) is an active-site residue. The tract at residues 1734-1776 (PEVRASSEPGAKVKASKTSKKEKKEKKPVTKAKSKSSKPSGWR) is disordered. Over residues 1747-1769 (KASKTSKKEKKEKKPVTKAKSKS) the composition is skewed to basic residues. Positions 1776 to 1850 (RDITEEVRNL…KFVQCVSNAL (75 aa)) constitute a Carrier domain. Ser-1810 carries the post-translational modification O-(pantetheine 4'-phosphoryl)serine. The disordered stretch occupies residues 1853-1903 (PNAGPAEAEDDEDEEKSDNSSSESASESDDAGSESSDTGILTPTGEEEQPL). Residues 1859 to 1868 (EAEDDEDEEK) are compositionally biased toward acidic residues. The methyltransferase domain stretch occupies residues 2115–2294 (NLLAERIGRT…HVDWTDGNLP (180 aa)). Positions 2360-2379 (SRAEKESGKTQAPHAAPGRR) are disordered. Positions 2387–2630 (VTGATGSLGS…QWIPVDYCAA (244 aa)) are NADPH-binding domain.

It depends on pantetheine 4'-phosphate as a cofactor.

The catalysed reaction is (3E,5E,7S)-5,7-dimethyl-2-oxonona-3,5-dienyl-[ACP] + 4 malonyl-CoA + AH2 + S-adenosyl-L-methionine + 3 H(+) = 6-[(3E,5E,7S)-5,7-dimethyl-2-oxonona-3,5-dienyl]-2,4-dihydroxy-3-methylbenzaldehyde + holo-[ACP] + A + S-adenosyl-L-homocysteine + 4 CO2 + 4 CoA + H2O. It functions in the pathway secondary metabolite biosynthesis. Iterative polyketide synthase; part of the gene cluster that mediates the biosynthesis of asperfuranone, a probable antitumor agent. The polyketide synthase afoG is responsible for producing the 3,5-dimethyloctadienone moiety from acetyl-CoA, three malonyl-CoA, and two S-adenosyl methionines (SAM). The 3,5-dimethyloctadienone moiety is then loaded onto the SAT domain of afoE and extended with four malonyl-CoA and one SAM, which leads to the formation of 2,4-dihydroxy-6-(5,7-dimethyl-2-oxo-trans-3-trans-5-nonadienyl)-3-methylbenzaldehyde (compound 2) after reductive release and aldol condensation. AfoD is the next enzyme in the biosynthesis sequence and hydroxylates the side chain at the benzylic position of compound 2. After benzylic hydroxylation, a furan ring is formed after five-member ring hemiacetal formation and water elimination. AfoF and afoC are proposed to oxidize the R-diketone proton and to reduce the unconjugated carbonyl group, respectively, to generate asperfuranone. Since no intermediates could be isolated from afoF and afoC deletants, the sequence of these two enzymes is not fully understood. Moreover, since afoC deletant still produces a small amount of asperfuranone, other endogenous oxidoreductases might catalyze the same reaction with much less efficiency. This is Iterative polyketide synthase afoE from Emericella nidulans (strain FGSC A4 / ATCC 38163 / CBS 112.46 / NRRL 194 / M139) (Aspergillus nidulans).